Reading from the N-terminus, the 214-residue chain is Adenylate kinase (214 aa).

10–15 (GAGKGT) contributes to the ATP binding site. The NMP stretch occupies residues 30 to 59 (STGDMLRAAVKAGSELGKQAKAIMDAGKLV). Residues threonine 31, arginine 36, 57–59 (KLV), 85–88 (GFPR), and glutamine 92 each bind AMP. The segment at 122–159 (GRRVHPGSGRVYHVKFNPPQVEGKDDVTGEDLMTRKDD) is LID. ATP-binding positions include arginine 123 and 132–133 (VY). The AMP site is built by arginine 156 and arginine 167. Glutamine 200 serves as a coordination point for ATP.

The protein belongs to the adenylate kinase family. As to quaternary structure, monomer.

The protein resides in the cytoplasm. The catalysed reaction is AMP + ATP = 2 ADP. Its pathway is purine metabolism; AMP biosynthesis via salvage pathway; AMP from ADP: step 1/1. Its function is as follows. Catalyzes the reversible transfer of the terminal phosphate group between ATP and AMP. Plays an important role in cellular energy homeostasis and in adenine nucleotide metabolism. The sequence is that of Adenylate kinase from Edwardsiella ictaluri (strain 93-146).